The chain runs to 262 residues: Acyl-[acyl-carrier-protein]--UDP-N-acetylglucosamine O-acyltransferase (262 aa).

Belongs to the transferase hexapeptide repeat family. LpxA subfamily. Homotrimer.

It is found in the cytoplasm. It catalyses the reaction a (3R)-hydroxyacyl-[ACP] + UDP-N-acetyl-alpha-D-glucosamine = a UDP-3-O-[(3R)-3-hydroxyacyl]-N-acetyl-alpha-D-glucosamine + holo-[ACP]. Its pathway is glycolipid biosynthesis; lipid IV(A) biosynthesis; lipid IV(A) from (3R)-3-hydroxytetradecanoyl-[acyl-carrier-protein] and UDP-N-acetyl-alpha-D-glucosamine: step 1/6. In terms of biological role, involved in the biosynthesis of lipid A, a phosphorylated glycolipid that anchors the lipopolysaccharide to the outer membrane of the cell. The sequence is that of Acyl-[acyl-carrier-protein]--UDP-N-acetylglucosamine O-acyltransferase from Verminephrobacter eiseniae (strain EF01-2).